We begin with the raw amino-acid sequence, 263 residues long: ATP synthase subunit delta (263 aa).

This sequence belongs to the ATPase delta chain family. In terms of assembly, F-type ATPases have 2 components, F(1) - the catalytic core - and F(0) - the membrane proton channel. F(1) has five subunits: alpha(3), beta(3), gamma(1), delta(1), epsilon(1). F(0) has three main subunits: a(1), b(2) and c(10-14). The alpha and beta chains form an alternating ring which encloses part of the gamma chain. F(1) is attached to F(0) by a central stalk formed by the gamma and epsilon chains, while a peripheral stalk is formed by the delta and b chains.

Its subcellular location is the cell membrane. In terms of biological role, f(1)F(0) ATP synthase produces ATP from ADP in the presence of a proton or sodium gradient. F-type ATPases consist of two structural domains, F(1) containing the extramembraneous catalytic core and F(0) containing the membrane proton channel, linked together by a central stalk and a peripheral stalk. During catalysis, ATP synthesis in the catalytic domain of F(1) is coupled via a rotary mechanism of the central stalk subunits to proton translocation. Its function is as follows. This protein is part of the stalk that links CF(0) to CF(1). It either transmits conformational changes from CF(0) to CF(1) or is implicated in proton conduction. In Leifsonia xyli subsp. xyli (strain CTCB07), this protein is ATP synthase subunit delta.